Consider the following 216-residue polypeptide: MSLGLVGRKVGMTRIFTAEGDSIPVTVLDVSDNRVTQIKTVETDGYTAVQVAFGSRRASRVTKPLAGHLAKAGVEAGEILKEFRIDAAKAAELSNGAVVGADLFEVGQKVDVQGVSIGKGYAGTIKRYNFSSGRATHGNSRSHNVPGSIGMAQDPGRVFPGKRMTGHMGDVTVTVQNLEIARIDAERKLLLVKGAIPGAKGGKVFVTPAVKTKGAK.

The span at 133 to 145 (GRATHGNSRSHNV) shows a compositional bias: polar residues. The interval 133-153 (GRATHGNSRSHNVPGSIGMAQ) is disordered. N5-methylglutamine is present on Q153.

Belongs to the universal ribosomal protein uL3 family. As to quaternary structure, part of the 50S ribosomal subunit. Forms a cluster with proteins L14 and L19. In terms of processing, methylated by PrmB.

One of the primary rRNA binding proteins, it binds directly near the 3'-end of the 23S rRNA, where it nucleates assembly of the 50S subunit. This Burkholderia cenocepacia (strain ATCC BAA-245 / DSM 16553 / LMG 16656 / NCTC 13227 / J2315 / CF5610) (Burkholderia cepacia (strain J2315)) protein is Large ribosomal subunit protein uL3.